A 480-amino-acid chain; its full sequence is Glycogen synthase (480 aa).

Residue K15 coordinates ADP-alpha-D-glucose.

It belongs to the glycosyltransferase 1 family. Bacterial/plant glycogen synthase subfamily.

It catalyses the reaction [(1-&gt;4)-alpha-D-glucosyl](n) + ADP-alpha-D-glucose = [(1-&gt;4)-alpha-D-glucosyl](n+1) + ADP + H(+). Its pathway is glycan biosynthesis; glycogen biosynthesis. In terms of biological role, synthesizes alpha-1,4-glucan chains using ADP-glucose. The sequence is that of Glycogen synthase from Rhizobium tropici.